The following is a 142-amino-acid chain: Transcription antitermination protein NusB (142 aa).

This sequence belongs to the NusB family.

In terms of biological role, involved in transcription antitermination. Required for transcription of ribosomal RNA (rRNA) genes. Binds specifically to the boxA antiterminator sequence of the ribosomal RNA (rrn) operons. This chain is Transcription antitermination protein NusB, found in Anaeromyxobacter dehalogenans (strain 2CP-1 / ATCC BAA-258).